The sequence spans 445 residues: MIRLVTMGKSSEAGVSSFQALTMSLSGRIGVGNVAGTATGIAYGGPGAVFWMWVITFIGAATAYVESTWRKFIKRNKTDNTVAVRRSTLKKALAGNGLRCSRAAIILSMAVLMPGIQANSIADSFSNAFGIPKLVTGIFVIAVLGFTIFGGVKRIAKTAEIVVPFMAVGYLFVAIAIIAANIEKVPDVFGLIFKSAFGADQVFGGILGSAVMWGVKRGLYANEAGQGTGAHPAAAAEVSHPAKQGLVQAFSIYLDVFLVVTATALMILFTGQYNVINEKTGETIVEHLKGVEPGAGYTQAAVDTLFPGFGSAFIAIALFFFAFTTMYAYYYIAETNLAYLVRSEKRGTAFFALKLVFLAATFYGTVKTATTAWAMGDIGLGIMVWLNLIAILLLFKPAYMALKDYEEQLKQGKDPEFNASKYGIKNAKFWENGYKRWEEKKGKAL.

9 helical membrane-spanning segments follow: residues 41 to 61 (IAYG…IGAA), 103 to 123 (AAII…SIAD), 129 to 149 (FGIP…FTIF), 159 to 179 (AEIV…AIIA), 188 to 208 (VFGL…GILG), 249 to 269 (AFSI…MILF), 304 to 324 (TLFP…FAFT), 349 to 369 (AFFA…VKTA), and 375 to 395 (MGDI…LLLF).

Belongs to the alanine or glycine:cation symporter (AGCS) (TC 2.A.25) family. In terms of processing, the N-terminus is blocked.

The protein resides in the cell membrane. In terms of biological role, mediates the active transport of alanine, driven by either an H(+) or Na(+) gradient. The chain is Sodium/proton-dependent alanine carrier protein from Bacillus sp. (strain PS3).